Consider the following 339-residue polypeptide: Methionine import ATP-binding protein MetN 1 (339 aa).

Positions 2–241 (ISFNNVSKVY…PKTKTTQNFV (240 aa)) constitute an ABC transporter domain. An ATP-binding site is contributed by 38 to 45 (GFSGAGKS).

The protein belongs to the ABC transporter superfamily. Methionine importer (TC 3.A.1.24) family. In terms of assembly, the complex is composed of two ATP-binding proteins (MetN), two transmembrane proteins (MetI) and a solute-binding protein (MetQ).

It is found in the cell membrane. The enzyme catalyses L-methionine(out) + ATP + H2O = L-methionine(in) + ADP + phosphate + H(+). The catalysed reaction is D-methionine(out) + ATP + H2O = D-methionine(in) + ADP + phosphate + H(+). Its function is as follows. Part of the ABC transporter complex MetNIQ involved in methionine import. Responsible for energy coupling to the transport system. In Bacillus thuringiensis subsp. konkukian (strain 97-27), this protein is Methionine import ATP-binding protein MetN 1.